The primary structure comprises 207 residues: Peptidyl-tRNA hydrolase (207 aa).

Tyrosine 14 provides a ligand contact to tRNA. The active-site Proton acceptor is histidine 19. TRNA-binding residues include tyrosine 64, asparagine 66, and asparagine 112.

The protein belongs to the PTH family. In terms of assembly, monomer.

It localises to the cytoplasm. The catalysed reaction is an N-acyl-L-alpha-aminoacyl-tRNA + H2O = an N-acyl-L-amino acid + a tRNA + H(+). Functionally, hydrolyzes ribosome-free peptidyl-tRNAs (with 1 or more amino acids incorporated), which drop off the ribosome during protein synthesis, or as a result of ribosome stalling. Its function is as follows. Catalyzes the release of premature peptidyl moieties from peptidyl-tRNA molecules trapped in stalled 50S ribosomal subunits, and thus maintains levels of free tRNAs and 50S ribosomes. The polypeptide is Peptidyl-tRNA hydrolase (Rhodopseudomonas palustris (strain BisB5)).